Reading from the N-terminus, the 373-residue chain is Dual-specificity RNA methyltransferase RlmN (373 aa).

Glutamate 94 functions as the Proton acceptor in the catalytic mechanism. Positions 100–339 (EDDRATLCVS…VIVRKTRGDD (240 aa)) constitute a Radical SAM core domain. Cysteine 107 and cysteine 344 are joined by a disulfide. [4Fe-4S] cluster is bound by residues cysteine 114, cysteine 118, and cysteine 121. Residues 168 to 169 (GE), serine 200, 222 to 224 (SIH), and asparagine 301 each bind S-adenosyl-L-methionine. Cysteine 344 (S-methylcysteine intermediate) is an active-site residue.

The protein belongs to the radical SAM superfamily. RlmN family. It depends on [4Fe-4S] cluster as a cofactor.

The protein localises to the cytoplasm. It carries out the reaction adenosine(2503) in 23S rRNA + 2 reduced [2Fe-2S]-[ferredoxin] + 2 S-adenosyl-L-methionine = 2-methyladenosine(2503) in 23S rRNA + 5'-deoxyadenosine + L-methionine + 2 oxidized [2Fe-2S]-[ferredoxin] + S-adenosyl-L-homocysteine. It catalyses the reaction adenosine(37) in tRNA + 2 reduced [2Fe-2S]-[ferredoxin] + 2 S-adenosyl-L-methionine = 2-methyladenosine(37) in tRNA + 5'-deoxyadenosine + L-methionine + 2 oxidized [2Fe-2S]-[ferredoxin] + S-adenosyl-L-homocysteine. Its function is as follows. Specifically methylates position 2 of adenine 2503 in 23S rRNA and position 2 of adenine 37 in tRNAs. m2A2503 modification seems to play a crucial role in the proofreading step occurring at the peptidyl transferase center and thus would serve to optimize ribosomal fidelity. The chain is Dual-specificity RNA methyltransferase RlmN from Shewanella sp. (strain W3-18-1).